A 390-amino-acid polypeptide reads, in one-letter code: Succinyl-diaminopimelate desuccinylase (390 aa).

Histidine 74 is a Zn(2+) binding site. Aspartate 76 is a catalytic residue. Residue aspartate 107 participates in Zn(2+) binding. The active-site Proton acceptor is glutamate 140. Glutamate 141, glutamate 169, and histidine 363 together coordinate Zn(2+).

The protein belongs to the peptidase M20A family. DapE subfamily. In terms of assembly, homodimer. The cofactor is Zn(2+). Co(2+) serves as cofactor.

The catalysed reaction is N-succinyl-(2S,6S)-2,6-diaminopimelate + H2O = (2S,6S)-2,6-diaminopimelate + succinate. The protein operates within amino-acid biosynthesis; L-lysine biosynthesis via DAP pathway; LL-2,6-diaminopimelate from (S)-tetrahydrodipicolinate (succinylase route): step 3/3. In terms of biological role, catalyzes the hydrolysis of N-succinyl-L,L-diaminopimelic acid (SDAP), forming succinate and LL-2,6-diaminopimelate (DAP), an intermediate involved in the bacterial biosynthesis of lysine and meso-diaminopimelic acid, an essential component of bacterial cell walls. In Bartonella henselae (strain ATCC 49882 / DSM 28221 / CCUG 30454 / Houston 1) (Rochalimaea henselae), this protein is Succinyl-diaminopimelate desuccinylase.